The sequence spans 430 residues: Isocitrate dehydrogenase [NADP], mitochondrial (430 aa).

Residues methionine 1–alanine 27 constitute a mitochondrion transit peptide. NADP(+)-binding positions include threonine 101 to threonine 103 and arginine 108. Position 103 (threonine 103) interacts with substrate. Substrate contacts are provided by residues serine 120–arginine 126, arginine 135, and arginine 158. Aspartate 277 is a binding site for Mn(2+). Lysine 285 lines the NADP(+) pocket. Residue aspartate 300 participates in Mn(2+) binding. NADP(+) contacts are provided by residues glycine 335–histidine 340 and asparagine 353.

Belongs to the isocitrate and isopropylmalate dehydrogenases family. In terms of assembly, homodimer. It depends on Mg(2+) as a cofactor. The cofactor is Mn(2+).

It localises to the mitochondrion. The catalysed reaction is D-threo-isocitrate + NADP(+) = 2-oxoglutarate + CO2 + NADPH. In terms of biological role, mitochondrial IDP1 may regulate flux through the tricarboxylic acid cycle and respiration. Its probably critical function is the production of NADPH. The protein is Isocitrate dehydrogenase [NADP], mitochondrial (IDP1) of Candida tropicalis (Yeast).